The primary structure comprises 466 residues: MAPVSNQVGGHVAVLAFPFSTHAAPLLNIVCRLAAAAPSTLFSFFNTKQSNSSILAGNTSVLRYSNVSVCEVADGVPEGYVFVGKPQEDIELFMKAAPDNFRRCLEASVAESGREVSCLVTDAFFWFGVHMADDMGGVPWVPFWTAGPASLSAHVHTDLIRSTTSGGCHDEKETITVIAGMSKVRPQDLPEGIIFGNLESLFSRMLHQMGQMPPLATAVFINSFEELDPVITNDLKSKFKRFLNVGPLDLLEPPASAATTTPQTAAEAVAGDGCLSWLDEQKVASVVYVSFGSVTRPSPEELMALAEALEASRVPFLWSLRDNLKNRQLDEFLSKGKLNGMVVPWAPQPQVLAHGSVGAFVTHCGWNSVLESVAGGVPLICRPFFGDQKLNARMVEDVWKIGLRLEGGVFTKNGMLKSLDMLLSQDKGTKMKNKINTLKQFAKQAVEPKGSSARNFESLLEMTTTN.

Catalysis depends on histidine 22, which acts as the Proton acceptor. The an anthocyanidin site is built by histidine 22 and glutamine 87. The active-site Charge relay is aspartate 122. A UDP-alpha-D-glucose-binding site is contributed by threonine 145. Position 154 (histidine 154) interacts with an anthocyanidin. UDP-alpha-D-glucose-binding residues include alanine 346, glutamine 348, histidine 363, tryptophan 366, asparagine 367, serine 368, and glutamate 371. Glycine 386 contacts an anthocyanidin. Aspartate 387 and glutamine 388 together coordinate UDP-alpha-D-glucose.

It belongs to the UDP-glycosyltransferase family. In terms of tissue distribution, highest expression detected in receptacles and achenes, with very low levels detected in runners, leaves, flowers, crowns and green receptacles.

The catalysed reaction is an anthocyanidin + UDP-alpha-D-glucose + H(+) = an anthocyanidin 3-O-beta-D-glucoside + UDP. It carries out the reaction cyanidin + UDP-alpha-D-glucose = cyanidin 3-O-beta-D-glucoside + UDP + H(+). The enzyme catalyses pelargonidin + UDP-alpha-D-glucose = pelargonidin 3-O-beta-D-glucoside + UDP. It catalyses the reaction peonidin + UDP-alpha-D-glucose = peonidin 3-O-beta-D-glucoside + UDP. The catalysed reaction is delphinidin + UDP-alpha-D-glucose = delphinidin 3-O-beta-D-glucoside + UDP. It carries out the reaction a flavonol + UDP-alpha-D-glucose = a flavonol 3-O-beta-D-glucoside + UDP + H(+). The protein operates within pigment biosynthesis; anthocyanin biosynthesis. Its function is as follows. In the presence of other necessary color factors, this glycosylation reaction allows the accumulation of anthocyanin pigments. Uses UDP-Glc as a sugar donor, but not UDP-Gal or UDP-GlcUA. Anthocyanidins are the preferred substrates in vivo, but flavonols can also be glucosylated in vitro. This is Anthocyanidin 3-O-glucosyltransferase 1 from Fragaria ananassa (Strawberry).